The following is a 92-amino-acid chain: Signal recognition particle 19 kDa protein (92 aa).

Belongs to the SRP19 family. As to quaternary structure, part of the signal recognition particle protein translocation system, which is composed of SRP and FtsY. Archaeal SRP consists of a 7S RNA molecule of 300 nucleotides and two protein subunits: SRP54 and SRP19.

It localises to the cytoplasm. Its function is as follows. Involved in targeting and insertion of nascent membrane proteins into the cytoplasmic membrane. Binds directly to 7S RNA and mediates binding of the 54 kDa subunit of the SRP. In Methanosphaera stadtmanae (strain ATCC 43021 / DSM 3091 / JCM 11832 / MCB-3), this protein is Signal recognition particle 19 kDa protein.